A 337-amino-acid chain; its full sequence is Glycine N(alpha)-acyltransferase (337 aa).

This sequence belongs to the acetyltransferase family.

The enzyme catalyses a (3R)-hydroxyacyl-[ACP] + glycine = a lyso-glycine lipid + holo-[ACP] + H(+). It catalyses the reaction (3R)-hydroxyhexadecanoyl-[ACP] + glycine = N-[(3R)-3-hydroxyhexadecanoyl]-glycine + holo-[ACP] + H(+). Its pathway is lipid metabolism. In terms of biological role, is involved in the production of glycine lipids (GL), which are phosphorus-free membrane lipids important for fitness during growth of the human gut bacterium B.thetaiotaomicron in vivo and in vitro. Catalyzes the first step of GL biosynthesis, i.e. the N-acylation of glycine via addition of a 3-hydroxy fatty acyl group, to form a range of monoacylated glycine (also named lyso-glycine lipids or lyso-GL). Is important for the ability of B.thetaiotaomicron to adapt to stress and colonize the mammalian gut. Also seems to be required for the production of flavolipin, an acylated serine-glycine dipeptide. In Bacteroides thetaiotaomicron (strain ATCC 29148 / DSM 2079 / JCM 5827 / CCUG 10774 / NCTC 10582 / VPI-5482 / E50), this protein is Glycine N(alpha)-acyltransferase.